The primary structure comprises 189 residues: Thermostable direct hemolysin-related (189 aa).

An N-terminal signal peptide occupies residues 1–24 (MKYRYFAKKSFLFISMLAAFKTFA). An intrachain disulfide couples Cys-175 to Cys-185.

Belongs to the TDH hemolysin family. As to quaternary structure, homodimer.

Functionally, bacterial hemolysins are exotoxins that attack blood cell membranes and cause cell rupture by mechanisms not clearly defined. The sequence is that of Thermostable direct hemolysin-related (tdh3) from Vibrio parahaemolyticus.